Consider the following 100-residue polypeptide: Small ribosomal subunit protein bS20 (100 aa).

The span at 1-22 shows a compositional bias: basic residues; it reads MASGKPKKKNPRLASGRKRARQ. The segment at 1–26 is disordered; the sequence is MASGKPKKKNPRLASGRKRARQGLKL.

The protein belongs to the bacterial ribosomal protein bS20 family.

In terms of biological role, binds directly to 16S ribosomal RNA. This chain is Small ribosomal subunit protein bS20, found in Acidovorax ebreus (strain TPSY) (Diaphorobacter sp. (strain TPSY)).